The sequence spans 527 residues: Matrix metalloproteinase-19 (527 aa).

The N-terminal stretch at 1–18 is a signal peptide; sequence MDWQQLWLAFLLPMTVSG. Positions 19 to 98 are excised as a propeptide; sequence RALGPTEKEA…EDPFNQKSLK (80 aa). The short motif at 84 to 91 is the Cysteine switch element; it reads PRCGLEDP. Zn(2+) is bound at residue C86. N109 carries N-linked (GlcNAc...) asparagine glycosylation. H213 is a Zn(2+) binding site. E214 is a catalytic residue. Zn(2+)-binding residues include H217 and H223. 4 Hemopexin repeats span residues 286–333, 334–372, 377–425, and 426–471; these read PNPC…WEGL, PGNL…FPMK, EPNL…FTGV, and PDRP…WMHC. C289 and C471 are oxidised to a cystine. N-linked (GlcNAc...) asparagine glycosylation is found at N464 and N479. Residues 473–500 are disordered; it reads SQTPDTNSSTGDVTPSTTDTVLGTTPST. D512 is lipidated: GPI-anchor amidated aspartate. The propeptide at 513 to 527 is removed in mature form; the sequence is SASLSFSANVTLLGA. N521 carries N-linked (GlcNAc...) asparagine glycosylation.

This sequence belongs to the peptidase M10A family. It depends on Zn(2+) as a cofactor. The cofactor is Ca(2+). In terms of processing, activated by autolytic cleavage after Lys-98. Tyrosine phosphorylated by PKDCC/VLK. As to expression, highly expressed in the liver. Expressed in the arterial tunica media of large blood vessels.

It localises to the cell membrane. It is found in the secreted. Its subcellular location is the extracellular space. The protein resides in the extracellular matrix. Functionally, endopeptidase that degrades various components of the extracellular matrix, such as aggrecan and cartilage oligomeric matrix protein (comp), during development, haemostasis and pathological conditions (arthritic disease). May also play a role in neovascularization or angiogenesis. Hydrolyzes collagen type IV, laminin, nidogen, nascin-C isoform, fibronectin, and type I gelatin. This is Matrix metalloproteinase-19 (Mmp19) from Mus musculus (Mouse).